A 423-amino-acid polypeptide reads, in one-letter code: D-tagatose-1,6-bisphosphate aldolase subunit GatZ (423 aa).

This sequence belongs to the GatZ/KbaZ family. GatZ subfamily. Forms a complex with GatY.

It participates in carbohydrate metabolism; D-tagatose 6-phosphate degradation; D-glyceraldehyde 3-phosphate and glycerone phosphate from D-tagatose 6-phosphate: step 2/2. Component of the tagatose-1,6-bisphosphate aldolase GatYZ that is required for full activity and stability of the Y subunit. Could have a chaperone-like function for the proper and stable folding of GatY. When expressed alone, GatZ does not show any aldolase activity. Is involved in the catabolism of galactitol. This is D-tagatose-1,6-bisphosphate aldolase subunit GatZ from Salmonella typhimurium (strain LT2 / SGSC1412 / ATCC 700720).